An 860-amino-acid polypeptide reads, in one-letter code: MEISSAGPVGAQPLLMVPRRPGYGTMGKPIKLLANCFQVEIPKIDVYLYEVDIKPDKCPRRVNREVVDSMVQHFKVTIFGDRRPVYDGKRSLYTANPLPVATTGVDLDVTLPGEGGKDRPFKVSIKFVSRVSWHLLHEVLTGRTLPEPLEPDKPISTNPVHAVDVVLRHLPSMKYTPVGRSFFSAPEGYDHPLGGGREVWFGFHQSVRPAMWKMMLNIDVSATAFYKAQPVIQFMCEVLDIHNIDEQPRPLTDSHRVKFTKEIKGLKVEVTHCGTMRRKYRVCNVTRRPASHQTFPLQLENGQTVERTVAQYFREKYNLQLKYPHLPCLQVGQEQKHTYLPLEVCNIVAGQRCIKKLTDNQTSTMIKATARSAPDRQEEISRLVRSANYDADPFVQEFQFKVRDEMAHVTGRVLPAPMLQYGGRNRTVATPSHGVWDMRGKQFHTGVEIKMWAIACFATQRQCREEILKGFTDQLRKISKDAGMPIQGQPCFCKYAQGADSVGPMFRHLKNTYSGLQLIIVILPGKTPVYAEVKRAGDTLLGMATQCVQVKNVIKTSPQTLSNLCLKINVKLGGINNILVPHQRPSVFQQPVIFLGADVTHPPAGDGKKPSIAAVVGSMDAHPSRYCATVRVQRPRQEIIQDLASMVRELLIQFYKSTRFKPTRIIFYRDGVSEGQFRQVLYYELLAIREACISLEKDYQPGITYIVVQKRHHTRLFCADRTERVGRSGNIPAGTTVDTDITHPYEFDFYLCSHAGIQGTSRPSHYHVLWDDNCFTADELQLLTYQLCHTYVRCTRSVSIPAPAYYAHLVAFRARYHLVDKEHDSAEGSHVSGQSNGRDPQALAKAVQIHQDTLRTMYFA.

Positions 230–349 (PVIQFMCEVL…LPLEVCNIVA (120 aa)) constitute a PAZ domain. A Piwi domain is found at 518 to 819 (LIIVILPGKT…VAFRARYHLV (302 aa)). The tract at residues 530–567 (YAEVKRAGDTLLGMATQCVQVKNVIKTSPQTLSNLCLK) is interaction with guide RNA. Positions 598, 638, and 670 each coordinate a divalent metal cation. Positions 758–805 (QGTSRPSHYHVLWDDNCFTADELQLLTYQLCHTYVRCTRSVSIPAPAY) are interaction with guide RNA. H808 contributes to the a divalent metal cation binding site.

Belongs to the argonaute family. Ago subfamily.

It is found in the cytoplasm. The protein resides in the P-body. It catalyses the reaction Endonucleolytic cleavage to 5'-phosphomonoester.. Functionally, required for RNA-mediated gene silencing (RNAi). Binds to short RNAs such as microRNAs (miRNAs) and represses the translation of mRNAs which are complementary to them. Possesses RNA slicer activity but only on select RNAs bearing 5'- and 3'-flanking sequences to the region of guide-target complementarity. This Gallus gallus (Chicken) protein is Protein argonaute-3 (AGO3).